Consider the following 132-residue polypeptide: Histone H2A.1 (132 aa).

It belongs to the histone H2A family. As to quaternary structure, the nucleosome is a histone octamer containing two molecules each of H2A, H2B, H3 and H4 assembled in one H3-H4 heterotetramer and two H2A-H2B heterodimers. The octamer wraps approximately 147 bp of DNA.

Its subcellular location is the nucleus. The protein localises to the chromosome. Core component of nucleosome. Nucleosomes wrap and compact DNA into chromatin, limiting DNA accessibility to the cellular machineries which require DNA as a template. Histones thereby play a central role in transcription regulation, DNA repair, DNA replication and chromosomal stability. DNA accessibility is regulated via a complex set of post-translational modifications of histones, also called histone code, and nucleosome remodeling. This Leishmania infantum protein is Histone H2A.1.